Consider the following 143-residue polypeptide: Hemoglobin cathodic subunit alpha (143 aa).

Serine 2 carries the N-acetylserine modification. The region spanning 2–143 (SLTAKDKTLV…VSAALADKYR (142 aa)) is the Globin domain. Histidine 59 provides a ligand contact to O2. Histidine 89 lines the heme b pocket.

Belongs to the globin family. Heterotetramer of two alpha chains and two beta chains. Red blood cells.

Its function is as follows. Involved in oxygen transport from the gills to the various peripheral tissues. This is Hemoglobin cathodic subunit alpha from Conger conger (Conger eel).